A 448-amino-acid polypeptide reads, in one-letter code: uncharacterized protein (448 aa).

The segment covering 187–198 (SKGDRGDADDRG) has biased composition (basic and acidic residues). 3 disordered regions span residues 187–221 (SKGDRGDADDRGPASVGSGGAPARGAGQQPELPTR), 243–270 (LQVPGGTSAAIPSASSTPSLPNLGGATM), and 291–361 (LSGL…LPNG). Positions 243-261 (LQVPGGTSAAIPSASSTPS) are enriched in low complexity. Over residues 307 to 334 (FDERGQEVRDPADYEHANEPDERRADDR) the composition is skewed to basic and acidic residues.

The protein to M.tuberculosis Rv0025 and Rv0739.

This is an uncharacterized protein from Mycobacterium tuberculosis (strain CDC 1551 / Oshkosh).